Consider the following 240-residue polypeptide: Urease accessory protein UreF (240 aa).

The protein belongs to the UreF family. As to quaternary structure, ureD, UreF and UreG form a complex that acts as a GTP-hydrolysis-dependent molecular chaperone, activating the urease apoprotein by helping to assemble the nickel containing metallocenter of UreC. The UreE protein probably delivers the nickel.

It is found in the cytoplasm. Its function is as follows. Required for maturation of urease via the functional incorporation of the urease nickel metallocenter. The protein is Urease accessory protein UreF of Bradyrhizobium sp. (strain ORS 278).